We begin with the raw amino-acid sequence, 553 residues long: Undecaprenyl phosphate-alpha-4-amino-4-deoxy-L-arabinose arabinosyl transferase (553 aa).

12 consecutive transmembrane segments (helical) span residues 8-28 (LLFS…RALW), 81-101 (FAVR…VYWL), 113-133 (LLSA…SYAV), 136-156 (PMVT…AQSA), 176-196 (LMTK…PWMI), 204-224 (LLLF…PWAI), 255-275 (APFW…VGLL), 289-309 (NSGS…FSLA), 313-333 (LPTY…HHGI), 351-371 (VAFG…WGLV), 384-404 (VLLG…CLVA), and 412-432 (AALC…DKVI).

It belongs to the glycosyltransferase 83 family.

The protein resides in the cell inner membrane. It catalyses the reaction 4-amino-4-deoxy-alpha-L-arabinopyranosyl di-trans,octa-cis-undecaprenyl phosphate + lipid IVA = lipid IIA + di-trans,octa-cis-undecaprenyl phosphate.. The protein operates within lipopolysaccharide metabolism; 4-amino-4-deoxy-beta-L-arabinose-lipid A biosynthesis. Catalyzes the transfer of the L-Ara4N moiety of the glycolipid undecaprenyl phosphate-alpha-L-Ara4N to lipid A. The modified arabinose is attached to lipid A and is required for resistance to polymyxin and cationic antimicrobial peptides. The sequence is that of Undecaprenyl phosphate-alpha-4-amino-4-deoxy-L-arabinose arabinosyl transferase from Erwinia tasmaniensis (strain DSM 17950 / CFBP 7177 / CIP 109463 / NCPPB 4357 / Et1/99).